The primary structure comprises 1340 residues: WASH complex subunit 2 (1340 aa).

Residues 1–219 (MNRTTPDQEL…VGSDRGSIVD (219 aa)) form a sufficient for interaction with WASHC3, WASHC4 and WASHC5; required for interaction with WASHC1 region. Phosphoserine is present on residues Ser157, Ser159, Ser204, Ser205, and Ser209. A compositionally biased stretch (low complexity) spans 201–213 (GELSSEEGSVGSD). The segment at 201–404 (GELSSEEGSV…SSSKPGKKIP (204 aa)) is disordered. Residues 219 to 231 (DTEEEKEEEESDE) show a composition bias toward acidic residues. Residues 232-241 (DFAHHSDNDQ) are compositionally biased toward basic and acidic residues. Composition is skewed to acidic residues over residues 249–258 (SDEEEDDDGC) and 265–275 (EKEEEDIEDIE). Phosphoserine is present on Ser287. Residues 292-306 (LAARIKGDAVGRVDE) are compositionally biased toward basic and acidic residues. Residue Thr330 is modified to Phosphothreonine. Gly residues predominate over residues 354 to 365 (GSGGGLFSGGKG). Positions 355 to 599 (SGGGLFSGGK…QTLSLQAQGE (245 aa)) are sufficient for interaction with CCDC93. The interaction with VPS35 stretch occupies residues 356–1340 (GGGLFSGGKG…DDPLNAFGGQ (985 aa)). Positions 366-377 (LFDDEDEESDLF) match the LFa 1 motif. 2 positions are modified to phosphoserine: Ser394 and Ser396. 3 consecutive short sequence motifs (LFa) follow at residues 410–418 (VFLGDTDVF), 449–462 (LFDD…DDFF), and 481–490 (IFGDDEGDLF). 3 disordered regions span residues 421-586 (ASVP…GGTA), 618-663 (SSDE…KASL), and 695-838 (DSGG…STGV). Residues 450–461 (FDDDDGDDDDDF) are compositionally biased toward acidic residues. Positions 506-516 (DENKARAEKKV) are enriched in basic and acidic residues. Positions 517–527 (SLPSSKNLKPS) are enriched in low complexity. 3 short sequence motifs (LFa) span residues 536 to 547 (LFSDEEDSEDLF), 571 to 582 (LFEDEDEEDNLF), and 616 to 628 (LFSS…WNIP). Phosphoserine is present on residues Ser538 and Ser543. Residues 546–566 (LFSSQSASKLKGAPLLPGKLP) are compositionally biased toward low complexity. 2 positions are modified to phosphoserine: Ser618 and Ser619. Residues 636-646 (SDSRSKGESRD) show a composition bias toward basic and acidic residues. Short sequence motifs (LFa) lie at residues 663-673 (LFEEDEEDDLF), 689-701 (LFED…GSLF), and 725-737 (LFSD…AQLG). Ser727, Ser751, Ser786, and Ser801 each carry phosphoserine. Residues 740 to 767 (PVDKKVESAKESLKFGRTDVAESEKEGL) show a composition bias toward basic and acidic residues. An LFa 11 motif is present at residues 802 to 816 (LFDEEEDKMEDQNTI). Residues 822–833 (EVGKGRDPDARP) show a composition bias toward basic and acidic residues. Short sequence motifs (LFa) lie at residues 838 to 846 (VFQDEELLF) and 855 to 861 (DPDVDLF). A phosphoserine mark is found at Ser873 and Ser876. The LFa 14 motif lies at 877 to 887 (LFGDDEDDDLF). Disordered regions lie at residues 906-950 (DYSV…KEPS) and 987-1205 (FPSS…EDED). The span at 916–930 (KHPETIQGIKEKGIW) shows a compositional bias: basic and acidic residues. An interaction with phospholipids region spans residues 936 to 1340 (QDSSGLAPFK…DDPLNAFGGQ (405 aa)). Residues 1027–1045 (NKSRVKMRGKRRPQTRAAR) show a composition bias toward basic residues. The segment at 1028-1046 (KSRVKMRGKRRPQTRAARR) is required for interaction with F-actin-capping protein subunit alpha (CAPZA1 or CAPZA2 or CAPZA3). Phosphoserine is present on residues Ser1053 and Ser1086. The segment covering 1093–1109 (EALAAAAAPWEGGPVPG) has biased composition (low complexity). Ser1113 bears the Phosphoserine mark. 6 consecutive short sequence motifs (LFa) follow at residues 1128-1135 (LFDSGDIF), 1170-1184 (MFPA…DDLF), 1200-1208 (LLEDEDDLF), 1233-1239 (IFEDDIF), 1261-1269 (LFDDNIDIF), and 1289-1298 (IFDDDMDDIF). 2 positions are modified to phosphoserine: Ser1178 and Ser1179. A disordered region spans residues 1301–1325 (GIQAKTAKPKSRSAQAAPEPRFEHK). The LFa 21 signature appears at 1329-1337 (IFDDPLNAF).

It belongs to the FAM21 family. As to quaternary structure, component of the WASH core complex also described as WASH regulatory complex (SHRC) composed of WASHC1, WASHC2, WASHC3, WASHC4 and WASHC5; in the complex interacts (via N-terminus) directly with WASHC1. The WASH core complex associates with the F-actin-capping protein dimer (formed by CAPZA1, CAPZA2 or CAPZA3 and CAPZB) in a transient or substoichiometric manner which was initially described as WASH complex. Interacts with VPS35; mediates the association with the retromer CSC complex. Interacts with FKBP15. Interacts with CCDC93, CCDC22, VPS35L; indicative for an association of the WASH core complex with the CCC and retriever complexes. Directly interacts with TBC1D23.

The protein resides in the early endosome membrane. It localises to the cell membrane. Acts as a component of the WASH core complex that functions as a nucleation-promoting factor (NPF) at the surface of endosomes, where it recruits and activates the Arp2/3 complex to induce actin polymerization, playing a key role in the fission of tubules that serve as transport intermediates during endosome sorting. Mediates the recruitment of the WASH core complex to endosome membranes via binding to phospholipids and VPS35 of the retromer CSC. Mediates the recruitment of the F-actin-capping protein dimer to the WASH core complex probably promoting localized F-actin polymerization needed for vesicle scission. Via its C-terminus binds various phospholipids, most strongly phosphatidylinositol 4-phosphate (PtdIns-(4)P), phosphatidylinositol 5-phosphate (PtdIns-(5)P) and phosphatidylinositol 3,5-bisphosphate (PtdIns-(3,5)P2). Involved in the endosome-to-plasma membrane trafficking and recycling of SNX27-retromer-dependent cargo proteins, such as GLUT1. Required for the association of DNAJC13, ENTR1, ANKRD50 with retromer CSC subunit VPS35. Required for the endosomal recruitment of CCC and retriever complexes subunits COMMD1 and CCDC93 as well as the retrievere complex subunit VPS35L. This chain is WASH complex subunit 2, found in Pongo abelii (Sumatran orangutan).